The following is a 332-amino-acid chain: tRNA-dihydrouridine synthase B (332 aa).

FMN-binding positions include proline 16 to alanine 18 and glutamine 70. Cysteine 100 serves as the catalytic Proton donor. Residues lysine 139, asparagine 200 to aspartate 202, and glycine 224 to arginine 225 contribute to the FMN site.

It belongs to the Dus family. DusB subfamily. FMN serves as cofactor.

The enzyme catalyses a 5,6-dihydrouridine in tRNA + NAD(+) = a uridine in tRNA + NADH + H(+). The catalysed reaction is a 5,6-dihydrouridine in tRNA + NADP(+) = a uridine in tRNA + NADPH + H(+). Catalyzes the synthesis of 5,6-dihydrouridine (D), a modified base found in the D-loop of most tRNAs, via the reduction of the C5-C6 double bond in target uridines. This chain is tRNA-dihydrouridine synthase B, found in Xanthomonas campestris pv. campestris (strain ATCC 33913 / DSM 3586 / NCPPB 528 / LMG 568 / P 25).